The following is a 342-amino-acid chain: Protein-glutamate methylesterase/protein-glutamine glutaminase 2 (342 aa).

The Response regulatory domain maps to 2 to 119; that stretch reads NIGIVNDLPL…GGSADPSQPL (118 aa). 4-aspartylphosphate is present on Asp-53. The 194-residue stretch at 144-337 folds into the CheB-type methylesterase domain; sequence PAPQGALPPL…DQLISLVQRN (194 aa). Active-site residues include Ser-159, His-186, and Asp-279.

The protein belongs to the CheB family. In terms of processing, phosphorylated by CheA. Phosphorylation of the N-terminal regulatory domain activates the methylesterase activity.

The protein resides in the cytoplasm. It catalyses the reaction [protein]-L-glutamate 5-O-methyl ester + H2O = L-glutamyl-[protein] + methanol + H(+). It carries out the reaction L-glutaminyl-[protein] + H2O = L-glutamyl-[protein] + NH4(+). Its function is as follows. Involved in chemotaxis. Part of a chemotaxis signal transduction system that modulates chemotaxis in response to various stimuli. Catalyzes the demethylation of specific methylglutamate residues introduced into the chemoreceptors (methyl-accepting chemotaxis proteins or MCP) by CheR. Also mediates the irreversible deamidation of specific glutamine residues to glutamic acid. This is Protein-glutamate methylesterase/protein-glutamine glutaminase 2 from Burkholderia mallei (strain ATCC 23344).